The chain runs to 367 residues: HTH-type transcriptional regulator GbdR (367 aa).

One can recognise an HTH araC/xylS-type domain in the interval 227 to 325 (QEIVALMEAN…GIPPRDERQG (99 aa)). 2 DNA-binding regions (H-T-H motif) span residues 244 to 265 (DELA…QKYL) and 292 to 315 (IIEV…REYF).

Functionally, specific regulator of choline metabolism, which activates transcription of at least 25 genes from 11 promoters in response to choline metabolites. Required for the induction of plcH, encoding the phospholipase C, and pchP, encoding the phosphorylcholine phosphatase, in response to glycine betaine (GB) and dimethylglycine (DMG). Also controls the expression of gbcAB and dgcAB, which are required for GB and DMG degradation, respectively, in response to both GB and DMG. The GbdR regulon also includes genes encoding sarcosine, glycine and serine catabolic enzymes, the BetX and CbcXWV quaternary amine transport proteins and the acetylcholine esterase gene, choE. Acts by binding directly to the promoter region of the genes. May play an important role during P.aeruginosa interactions with eukaryotes. This chain is HTH-type transcriptional regulator GbdR, found in Pseudomonas aeruginosa (strain UCBPP-PA14).